A 363-amino-acid polypeptide reads, in one-letter code: Ribosome-binding ATPase YchF (363 aa).

Residues 3–256 (FKCGIVGLPN…LDDEERDEFM (254 aa)) enclose the OBG-type G domain. 12–17 (NVGKST) contacts ATP. 2 residues coordinate Mg(2+): Ser-16 and Thr-36. The region spanning 278–361 (NLQTYFTAGV…KDGDVMNFLF (84 aa)) is the TGS domain.

The protein belongs to the TRAFAC class OBG-HflX-like GTPase superfamily. OBG GTPase family. YchF/OLA1 subfamily. It depends on Mg(2+) as a cofactor.

ATPase that binds to both the 70S ribosome and the 50S ribosomal subunit in a nucleotide-independent manner. The polypeptide is Ribosome-binding ATPase YchF (Escherichia coli O157:H7).